We begin with the raw amino-acid sequence, 241 residues long: Homeobox protein TGIF2LX (241 aa).

Disordered stretches follow at residues Met-1–Tyr-56 and Arg-115–Asp-213. A compositionally biased stretch (polar residues) spans Ala-21 to Asp-39. Positions Glu-48–Asp-111 form a DNA-binding region, homeobox; TALE-type.

It belongs to the TALE/TGIF homeobox family.

The protein localises to the nucleus. In terms of biological role, may have a transcription role in testis. The chain is Homeobox protein TGIF2LX (TGIF2LX) from Hylobates lar (Lar gibbon).